We begin with the raw amino-acid sequence, 59 residues long: Alpha-like toxin CsEv5 (59 aa).

An LCN-type CS-alpha/beta domain is found at 1-59 (KDGYPVDSKGCKLSCVANNYCDNQCKMKKASGGHCYAMSCYCEGLPENAKVSDSATNIC). 4 disulfide bridges follow: cysteine 11-cysteine 59, cysteine 15-cysteine 35, cysteine 21-cysteine 40, and cysteine 25-cysteine 42.

Belongs to the long (4 C-C) scorpion toxin superfamily. Sodium channel inhibitor family. Expressed by the venom gland.

The protein localises to the secreted. Functionally, binds voltage-independently sodium channels (Nav) and inhibits the inactivation of the activated channels, thereby blocking neuronal transmission. Is highly toxic to insects and barely toxic to mammals. As it does not compete with the classical alpha-toxin AaH2, this toxin is considered as an alpha-like toxin. This Centruroides sculpturatus (Arizona bark scorpion) protein is Alpha-like toxin CsEv5.